Consider the following 578-residue polypeptide: Sulfite reductase [NADPH] hemoprotein beta-component (578 aa).

4 residues coordinate [4Fe-4S] cluster: cysteine 441, cysteine 447, cysteine 487, and cysteine 491. Cysteine 491 contributes to the siroheme binding site.

Belongs to the nitrite and sulfite reductase 4Fe-4S domain family. In terms of assembly, alpha(8)-beta(8). The alpha component is a flavoprotein, the beta component is a hemoprotein. It depends on siroheme as a cofactor. [4Fe-4S] cluster serves as cofactor.

It catalyses the reaction hydrogen sulfide + 3 NADP(+) + 3 H2O = sulfite + 3 NADPH + 4 H(+). It functions in the pathway sulfur metabolism; hydrogen sulfide biosynthesis; hydrogen sulfide from sulfite (NADPH route): step 1/1. Its function is as follows. Component of the sulfite reductase complex that catalyzes the 6-electron reduction of sulfite to sulfide. This is one of several activities required for the biosynthesis of L-cysteine from sulfate. In Vibrio vulnificus (strain CMCP6), this protein is Sulfite reductase [NADPH] hemoprotein beta-component.